Here is a 1148-residue protein sequence, read N- to C-terminus: Replication factor C subunit 1 (1148 aa).

The span at 46–56 shows a compositional bias: basic and acidic residues; that stretch reads NSSRKEDDFKQ. Disordered regions lie at residues 46-201 and 228-380; these read NSSR…LNDE and TLAM…TNYQ. Lysine 50 participates in a covalent cross-link: Glycyl lysine isopeptide (Lys-Gly) (interchain with G-Cter in SUMO2). Tyrosine 67 is modified (phosphotyrosine). Residues serine 69, serine 71, serine 73, and serine 108 each carry the phosphoserine modification. Phosphothreonine is present on threonine 110. The segment covering 130–141 has biased composition (polar residues); the sequence is RSTNSHLGTSNM. Serine 156 bears the Phosphoserine mark. Phosphothreonine is present on residues threonine 161 and threonine 163. Phosphoserine is present on residues serine 164, serine 173, and serine 190. Basic and acidic residues predominate over residues 234–246; it reads EEPKTKKARKDTE. Residue serine 253 is modified to Phosphoserine. Residues 262 to 271 are compositionally biased toward basic residues; the sequence is EKHKYPHKVK. 2 positions are modified to phosphoserine: serine 281 and serine 283. Positions 288-308 are enriched in basic and acidic residues; the sequence is SKYESSKESQQHSKSSADKIG. The residue at position 312 (serine 312) is a Phosphoserine. Basic and acidic residues-rich tracts occupy residues 323–353 and 362–376; these read KRKEESSYKEIEPVASKRKENAIKLKGETKT and AKKESVSPEDSEKKR. Residue serine 368 is modified to Phosphoserine. The BRCT domain occupies 402–492; sequence GAENCLEGLI…PGKKSKYEIA (91 aa). 2 stretches are compositionally biased toward basic and acidic residues: residues 496 to 507 and 520 to 538; these read EMKKESKLERTP and SKKESESKKSRPTSKRDSL. The segment at 496–538 is disordered; it reads EMKKESKLERTPQKNVQGKRKISPSKKESESKKSRPTSKRDSL. The residue at position 537 (serine 537) is a Phosphoserine. ATP is bound at residue 650-657; it reads SGPPGVGK. The disordered stretch occupies residues 1081 to 1148; sequence KASRHSTSPS…RKGKGKSSKK (68 aa). Residues 1094–1105 show a composition bias toward acidic residues; the sequence is EYNEELNEDDSQ. 2 positions are modified to phosphoserine: serine 1104 and serine 1106. A Nuclear localization signal motif is present at residues 1120 to 1124; that stretch reads IKKKT. A compositionally biased stretch (basic and acidic residues) spans 1130 to 1140; that stretch reads SKPEKDKEPRK.

Belongs to the activator 1 large subunit family. As to quaternary structure, large subunit of the RFC complex, an heteropentameric complex consisting of RFC1 and four small subunits RFC2, RFC3, RFC4 and RFC5; the RFC complex interacts with PCNA and the interaction involves RFC1. As to expression, wide tissue distribution. Undetectable in placental tissue.

The protein localises to the nucleus. In terms of biological role, subunit of the replication factor C (RFC) complex which acts during elongation of primed DNA templates by DNA polymerases delta and epsilon, and is necessary for ATP-dependent loading of proliferating cell nuclear antigen (PCNA) onto primed DNA. This subunit binds to the primer-template junction. Binds the PO-B transcription element as well as other GA rich DNA sequences. Can bind single- or double-stranded DNA. The polypeptide is Replication factor C subunit 1 (RFC1) (Homo sapiens (Human)).